Reading from the N-terminus, the 440-residue chain is Chromosomal replication initiator protein DnaA (440 aa).

A domain I, interacts with DnaA modulators region spans residues M1 to I75. The domain II stretch occupies residues I75–T99. The domain III, AAA+ region stretch occupies residues I100–A316. The ATP site is built by G146, G148, K149, and T150. A domain IV, binds dsDNA region spans residues T317–S440.

This sequence belongs to the DnaA family. As to quaternary structure, oligomerizes as a right-handed, spiral filament on DNA at oriC.

Its subcellular location is the cytoplasm. In terms of biological role, plays an essential role in the initiation and regulation of chromosomal replication. ATP-DnaA binds to the origin of replication (oriC) to initiate formation of the DNA replication initiation complex once per cell cycle. Binds the DnaA box (a 9 base pair repeat at the origin) and separates the double-stranded (ds)DNA. Forms a right-handed helical filament on oriC DNA; dsDNA binds to the exterior of the filament while single-stranded (ss)DNA is stabiized in the filament's interior. The ATP-DnaA-oriC complex binds and stabilizes one strand of the AT-rich DNA unwinding element (DUE), permitting loading of DNA polymerase. After initiation quickly degrades to an ADP-DnaA complex that is not apt for DNA replication. Binds acidic phospholipids. This is Chromosomal replication initiator protein DnaA from Campylobacter jejuni subsp. jejuni serotype O:6 (strain 81116 / NCTC 11828).